Consider the following 322-residue polypeptide: Altered inheritance of mitochondria protein 32 (322 aa).

It belongs to the AIM32 family.

The protein is Altered inheritance of mitochondria protein 32 (AIM32) of Kluyveromyces lactis (strain ATCC 8585 / CBS 2359 / DSM 70799 / NBRC 1267 / NRRL Y-1140 / WM37) (Yeast).